The sequence spans 549 residues: Cation/acetate symporter ActP (549 aa).

13 helical membrane passes run 33 to 53 (WQAI…TYWA), 77 to 97 (LAIA…ALVF), 103 to 123 (GLIY…LIAE), 148 to 168 (ILSA…QMVG), 183 to 203 (IAVV…GMLA), 206 to 226 (WVQI…AFMV), 262 to 282 (ISAL…PHIL), 303 to 323 (GFMG…IMLV), 355 to 375 (LFLG…VAGL), 404 to 424 (VSKI…VLFE), 428 to 448 (IAFM…PIIL), 464 to 484 (GGWL…TIWV), and 493 to 513 (IFPY…GIWL).

This sequence belongs to the sodium:solute symporter (SSF) (TC 2.A.21) family.

It localises to the cell inner membrane. Its function is as follows. Transports acetate. The chain is Cation/acetate symporter ActP from Escherichia coli O1:K1 / APEC.